Consider the following 216-residue polypeptide: MTSKNYNYHVTHFVTSAPDIRHLPGDEGIEVAFAGRSNAGKSSALNTLTNQKGLARTSKTPGRTQLINLFEVEEGIRLVDLPGYGYAEVPEEMKRKWQRALGEYLQMRNCLKGLVVLMDIRHPLKDLDQQMIQWAVEVGTPVLLLLTKADKLASGARKAQLNMVREAVVPFMGDIQVEAFSSPKKIGVDKLSQKLNTWFNEIPPEVLPEDDDTAGE.

The EngB-type G domain maps to 27-201 (EGIEVAFAGR…SQKLNTWFNE (175 aa)). Residues 35–42 (GRSNAGKS), 62–66 (GRTQL), 80–83 (DLPG), 147–150 (TKAD), and 180–182 (FSS) each bind GTP. S42 and T64 together coordinate Mg(2+).

The protein belongs to the TRAFAC class TrmE-Era-EngA-EngB-Septin-like GTPase superfamily. EngB GTPase family. Mg(2+) serves as cofactor.

Its function is as follows. Necessary for normal cell division and for the maintenance of normal septation. This Serratia proteamaculans (strain 568) protein is Probable GTP-binding protein EngB.